Consider the following 75-residue polypeptide: Small ribosomal subunit protein bS18 (75 aa).

Belongs to the bacterial ribosomal protein bS18 family. Part of the 30S ribosomal subunit. Forms a tight heterodimer with protein bS6.

Functionally, binds as a heterodimer with protein bS6 to the central domain of the 16S rRNA, where it helps stabilize the platform of the 30S subunit. The chain is Small ribosomal subunit protein bS18 from Shewanella halifaxensis (strain HAW-EB4).